Consider the following 195-residue polypeptide: dITP/XTP pyrophosphatase (195 aa).

Threonine 9–lysine 14 serves as a coordination point for substrate. Residues glutamate 41 and aspartate 70 each contribute to the Mg(2+) site. Residue aspartate 70 is the Proton acceptor of the active site. Substrate is bound by residues serine 71, phenylalanine 155 to aspartate 158, lysine 178, and histidine 183 to arginine 184.

This sequence belongs to the HAM1 NTPase family. As to quaternary structure, homodimer. The cofactor is Mg(2+).

The catalysed reaction is XTP + H2O = XMP + diphosphate + H(+). It catalyses the reaction dITP + H2O = dIMP + diphosphate + H(+). It carries out the reaction ITP + H2O = IMP + diphosphate + H(+). In terms of biological role, pyrophosphatase that catalyzes the hydrolysis of nucleoside triphosphates to their monophosphate derivatives, with a high preference for the non-canonical purine nucleotides XTP (xanthosine triphosphate), dITP (deoxyinosine triphosphate) and ITP. Seems to function as a house-cleaning enzyme that removes non-canonical purine nucleotides from the nucleotide pool, thus preventing their incorporation into DNA/RNA and avoiding chromosomal lesions. This is dITP/XTP pyrophosphatase from Haemophilus influenzae (strain ATCC 51907 / DSM 11121 / KW20 / Rd).